We begin with the raw amino-acid sequence, 82 residues long: Small ribosomal subunit protein uS17 (82 aa).

The protein belongs to the universal ribosomal protein uS17 family. In terms of assembly, part of the 30S ribosomal subunit.

Its function is as follows. One of the primary rRNA binding proteins, it binds specifically to the 5'-end of 16S ribosomal RNA. The sequence is that of Small ribosomal subunit protein uS17 from Tolumonas auensis (strain DSM 9187 / NBRC 110442 / TA 4).